Consider the following 242-residue polypeptide: Tryptophan synthase alpha chain (242 aa).

Catalysis depends on proton acceptor residues E31 and D42.

The protein belongs to the TrpA family. As to quaternary structure, tetramer of two alpha and two beta chains.

The catalysed reaction is (1S,2R)-1-C-(indol-3-yl)glycerol 3-phosphate + L-serine = D-glyceraldehyde 3-phosphate + L-tryptophan + H2O. The protein operates within amino-acid biosynthesis; L-tryptophan biosynthesis; L-tryptophan from chorismate: step 5/5. The alpha subunit is responsible for the aldol cleavage of indoleglycerol phosphate to indole and glyceraldehyde 3-phosphate. The polypeptide is Tryptophan synthase alpha chain (Staphylococcus aureus (strain MRSA252)).